Reading from the N-terminus, the 616-residue chain is Chaperone protein HscA (616 aa).

Belongs to the heat shock protein 70 family.

Chaperone involved in the maturation of iron-sulfur cluster-containing proteins. Has a low intrinsic ATPase activity which is markedly stimulated by HscB. Involved in the maturation of IscU. The chain is Chaperone protein HscA from Escherichia coli O139:H28 (strain E24377A / ETEC).